Here is a 150-residue protein sequence, read N- to C-terminus: UPF0208 membrane protein VC_1099 (150 aa).

2 consecutive transmembrane segments (helical) span residues 42–62 (FAIKVMPAVAAISVLTQMVFA) and 70–90 (AIVVALFAMSLPLQGIWWLGH).

This sequence belongs to the UPF0208 family.

The protein resides in the cell inner membrane. This is UPF0208 membrane protein VC_1099 from Vibrio cholerae serotype O1 (strain ATCC 39315 / El Tor Inaba N16961).